The chain runs to 76 residues: Putative membrane protein insertion efficiency factor (76 aa).

Belongs to the UPF0161 family.

It localises to the cell inner membrane. Could be involved in insertion of integral membrane proteins into the membrane. This is Putative membrane protein insertion efficiency factor from Paraburkholderia phymatum (strain DSM 17167 / CIP 108236 / LMG 21445 / STM815) (Burkholderia phymatum).